Here is a 34-residue protein sequence, read N- to C-terminus: MNGDNPSPNRPLVTVVYKGPDFYDGEKKPPVNRR.

Positions 1 to 34 (MNGDNPSPNRPLVTVVYKGPDFYDGEKKPPVNRR) are disordered. The span at 24–34 (DGEKKPPVNRR) shows a compositional bias: basic and acidic residues.

In Escherichia coli (strain K12), this protein is Protein MgtT.